The sequence spans 549 residues: Biotin-dependent acetyl-/propionyl-coenzyme A carboxylase beta5 subunit (549 aa).

Residues Thr25–Ser281 form the CoA carboxyltransferase N-terminal domain. The CoA carboxyltransferase C-terminal domain maps to Ala295–Lys542.

It belongs to the AccD/PCCB family. The biotin-dependent acyl-CoA carboxylase complex is composed of AccA3, which contains the biotin carboxylase (BC) and biotin carboxyl carrier protein (BCCP) domains, and AccD5, which contains the carboxyl transferase (CT) domain.

The enzyme catalyses N(6)-carboxybiotinyl-L-lysyl-[protein] + acetyl-CoA = N(6)-biotinyl-L-lysyl-[protein] + malonyl-CoA. It carries out the reaction N(6)-carboxybiotinyl-L-lysyl-[protein] + propanoyl-CoA = methylmalonyl-CoA + N(6)-biotinyl-L-lysyl-[protein]. Its pathway is lipid metabolism; mycolic acid biosynthesis. Functionally, component of a biotin-dependent acyl-CoA carboxylase complex. This subunit transfers the CO2 from carboxybiotin to the CoA ester substrate. When associated with the alpha3 subunit AccA3, is involved in the carboxylation of acetyl-CoA and propionyl-CoA. The protein is Biotin-dependent acetyl-/propionyl-coenzyme A carboxylase beta5 subunit (accD5) of Mycobacterium leprae (strain TN).